Consider the following 683-residue polypeptide: E3 ubiquitin-protein ligase RNF103 (683 aa).

The next 4 membrane-spanning stretches (helical) occupy residues 6–26, 326–346, 366–386, and 411–431; these read FFLL…EAIV, LFVL…FITQ, LLII…LDSF, and MFYT…GLLI. Positions 525–542 are enriched in acidic residues; it reads EEMSESSQDTENDSDSDN. Positions 525–548 are disordered; the sequence is EEMSESSQDTENDSDSDNMDTFSS. The RING-type zinc finger occupies 619–661; it reads CVVCLENFENGCLLMGLPCGHVFHQNCIVMWLAGGRHCCPVCR.

As to quaternary structure, interacts with DERL1 and VCP. Highly expressed in the normal cerebellum but not in the cerebral cortex.

The protein resides in the endoplasmic reticulum membrane. It carries out the reaction S-ubiquitinyl-[E2 ubiquitin-conjugating enzyme]-L-cysteine + [acceptor protein]-L-lysine = [E2 ubiquitin-conjugating enzyme]-L-cysteine + N(6)-ubiquitinyl-[acceptor protein]-L-lysine.. The protein operates within protein modification; protein ubiquitination. Acts as an E2-dependent E3 ubiquitin-protein ligase, probably involved in the ER-associated protein degradation pathway. The protein is E3 ubiquitin-protein ligase RNF103 (Rnf103) of Mus musculus (Mouse).